The chain runs to 427 residues: Light-independent protochlorophyllide reductase subunit N (427 aa).

Positions 28, 53, and 114 each coordinate [4Fe-4S] cluster.

It belongs to the BchN/ChlN family. As to quaternary structure, protochlorophyllide reductase is composed of three subunits; BchL, BchN and BchB. Forms a heterotetramer of two BchB and two BchN subunits. [4Fe-4S] cluster is required as a cofactor.

The enzyme catalyses chlorophyllide a + oxidized 2[4Fe-4S]-[ferredoxin] + 2 ADP + 2 phosphate = protochlorophyllide a + reduced 2[4Fe-4S]-[ferredoxin] + 2 ATP + 2 H2O. Its pathway is porphyrin-containing compound metabolism; bacteriochlorophyll biosynthesis (light-independent). Its function is as follows. Component of the dark-operative protochlorophyllide reductase (DPOR) that uses Mg-ATP and reduced ferredoxin to reduce ring D of protochlorophyllide (Pchlide) to form chlorophyllide a (Chlide). This reaction is light-independent. The NB-protein (BchN-BchB) is the catalytic component of the complex. The protein is Light-independent protochlorophyllide reductase subunit N of Dinoroseobacter shibae (strain DSM 16493 / NCIMB 14021 / DFL 12).